The chain runs to 88 residues: Small ribosomal subunit protein bS16 (88 aa).

The protein belongs to the bacterial ribosomal protein bS16 family.

This is Small ribosomal subunit protein bS16 from Sorangium cellulosum (strain So ce56) (Polyangium cellulosum (strain So ce56)).